The chain runs to 235 residues: Uridylate kinase (235 aa).

9–12 lines the ATP pocket; that stretch reads KLSG. The involved in allosteric activation by GTP stretch occupies residues 17-22; it reads GDQGYG. Glycine 51 serves as a coordination point for UMP. Positions 52 and 56 each coordinate ATP. UMP-binding positions include aspartate 71 and 132-139; that span reads CGNPFFTT. Residues threonine 159, tyrosine 165, and aspartate 168 each coordinate ATP.

This sequence belongs to the UMP kinase family. In terms of assembly, homohexamer.

It is found in the cytoplasm. The enzyme catalyses UMP + ATP = UDP + ADP. It functions in the pathway pyrimidine metabolism; CTP biosynthesis via de novo pathway; UDP from UMP (UMPK route): step 1/1. Its activity is regulated as follows. Allosterically activated by GTP. Inhibited by UTP. Catalyzes the reversible phosphorylation of UMP to UDP. The protein is Uridylate kinase of Synechococcus sp. (strain WH7803).